The primary structure comprises 381 residues: MRFTALASAILPLACNVLALPAKTGEAPKLDVSLSQVDNTLIKAVVKNTGSEDITFVHLNFFRDKAPVKKVSLFRQRYVIPLHPHFPALTSVIQPTELPFQGIKQRFRTEGLTEDALTVLAPGESIEDEFDIAATSDLSEGGSITISTDGFVPIATGNKITGSVPYSSNELSIEVDAAQAASVASAVKPLDKRTKVASCSGTRSSALSTALKNTVSLANQAASAAQSGSSSRFQEYFKTTSSSVRTSVAARFRAVASEASSTSSGSTTYYCTDTYGYCSSNVPGVHLPAYNIIANCDIYYTYLSALTRTCHAQDQATTTLHEFTHAPGVYSPGTDDLGYGYDAATALSSSQALNNVDTYALFANGKFLLSREVDVKYLHTT.

Residues M1–A19 form the signal peptide. Positions L20–R193 are excised as a propeptide. Cystine bridges form between C199–C271 and C278–C296. H321 is a Zn(2+) binding site. E322 is an active-site residue. Residues H325 and D336 each contribute to the Zn(2+) site.

The protein belongs to the peptidase M35 family. Requires Zn(2+) as cofactor.

The enzyme catalyses Preferential cleavage of bonds with hydrophobic residues in P1'. Also 3-Asn-|-Gln-4 and 8-Gly-|-Ser-9 bonds in insulin B chain.. Secreted metalloproteinase that allows assimilation of proteinaceous substrates. Shows high activities on basic nuclear substrates such as histone and protamine. The sequence is that of Neutral protease 2 homolog mep20 (mep20) from Aspergillus flavus.